The chain runs to 352 residues: Ion-translocating oxidoreductase complex subunit D (352 aa).

4 helical membrane-spanning segments follow: residues 20-40 (IMLL…WFFG), 42-62 (GTLF…AIVL), 69-91 (VASH…SIPP), and 123-143 (PAMI…TSWL). Thr-187 carries the FMN phosphoryl threonine modification. The next 5 helical transmembrane spans lie at 215–235 (LAGV…VFLL), 242–262 (WHIP…GWLF), 267–287 (LASP…FFIL), 301–321 (LIFG…GGYP), and 322–342 (DGVA…DYYT).

This sequence belongs to the NqrB/RnfD family. As to quaternary structure, the complex is composed of six subunits: RsxA, RsxB, RsxC, RsxD, RsxE and RsxG. It depends on FMN as a cofactor.

It localises to the cell inner membrane. Its function is as follows. Part of a membrane-bound complex that couples electron transfer with translocation of ions across the membrane. Required to maintain the reduced state of SoxR. The polypeptide is Ion-translocating oxidoreductase complex subunit D (Salmonella enteritidis PT4 (strain P125109)).